A 649-amino-acid polypeptide reads, in one-letter code: Exoribonuclease 2 (649 aa).

Residues 190–517 form the RNB domain; it reads RKDLTDLDFI…NHRLLKSIIK (328 aa). The S1 motif domain occupies 562–644; sequence NQKFNAEITD…KTRSIIAKPV (83 aa).

Belongs to the RNR ribonuclease family. RNase II subfamily.

The protein localises to the cytoplasm. The catalysed reaction is Exonucleolytic cleavage in the 3'- to 5'-direction to yield nucleoside 5'-phosphates.. Its function is as follows. Involved in mRNA degradation. Hydrolyzes single-stranded polyribonucleotides processively in the 3' to 5' direction. The chain is Exoribonuclease 2 from Buchnera aphidicola subsp. Acyrthosiphon pisum (strain 5A).